The chain runs to 120 residues: Large ribosomal subunit protein uL22 (120 aa).

The protein belongs to the universal ribosomal protein uL22 family. Part of the 50S ribosomal subunit.

Its function is as follows. This protein binds specifically to 23S rRNA; its binding is stimulated by other ribosomal proteins, e.g. L4, L17, and L20. It is important during the early stages of 50S assembly. It makes multiple contacts with different domains of the 23S rRNA in the assembled 50S subunit and ribosome. The globular domain of the protein is located near the polypeptide exit tunnel on the outside of the subunit, while an extended beta-hairpin is found that lines the wall of the exit tunnel in the center of the 70S ribosome. This is Large ribosomal subunit protein uL22 from Corynebacterium efficiens (strain DSM 44549 / YS-314 / AJ 12310 / JCM 11189 / NBRC 100395).